Reading from the N-terminus, the 332-residue chain is MAVFTAVSDSDLAQWMRHYALGDVVAFRGIPSGIENSNFFLTTTRGEYVLTIFEKLTAEQLPFYLDLMRHLAGHGVPVPDPVPRDDGALFGTLHGKPAAIVTKLDGAAELAPGVEHCIEVGQMLARMHLAGRDYPRRQPNLRSLPWWQENVPAIVPFVTDAQRALLEGELAHQARFFGSEDYAALPGGPCHCDLFRDNVLFAHAAPDTGHAVRLGGFFDFYFAGCDKWLFDVAVTVNDWCVDLATGVLDTARADALLRAYQTVRPFTAEERRHWSDMLRAGAYRFWVSRLYDFYLPRAAEMLKPHDPGHFERILRERIAHTPALPEIQTACN.

Belongs to the pseudomonas-type ThrB family.

It carries out the reaction L-homoserine + ATP = O-phospho-L-homoserine + ADP + H(+). It participates in amino-acid biosynthesis; L-threonine biosynthesis; L-threonine from L-aspartate: step 4/5. The sequence is that of Homoserine kinase from Burkholderia multivorans (strain ATCC 17616 / 249).